A 318-amino-acid chain; its full sequence is MAPEFESGTKMATTIQKSSCAYVTFLAGNGDYVKGVVGLAKGLIKAKSMYPLVVAILPDVPEEHRMILTRHGCIVKEIEPLAPSLQSLDKYARSYYVLNYSKLRIWEFVEYSKMVYLDGDMQVFENIDHLFELPDKYLYAVADCICDMYGEPCDEVLPWPKELGPRPSVYFNAGMFVFQPNPSVYVRLLNTLKVTPPTQFAEQDFLNMYFKDVYKPIPYTYNMLLAMLWRHPEKIEVNKAKAVHYCSPGAKPWKYTGKEEHMDREDIKMLVKKWWDIYNDTTLDHKAQGSTVEANRLRGAAFSDTNISALYITSPSAA.

Residue K102 is part of the active site. 3 residues coordinate Mn(2+): D118, D120, and H244.

This sequence belongs to the glycosyltransferase 8 family. Galactosyltransferase subfamily. A divalent metal cation serves as cofactor. As to expression, expressed in seeds, mostly in radicle tips.

Its subcellular location is the cytoplasm. The enzyme catalyses myo-inositol + UDP-alpha-D-galactose = alpha-D-galactosyl-(1-&gt;3)-1D-myo-inositol + UDP + H(+). Galactinol synthase involved in the biosynthesis of raffinose family oligosaccharides (RFOs) that function as osmoprotectants. May promote plant stress tolerance. The chain is Galactinol synthase 1 (GOLS1) from Solanum lycopersicum (Tomato).